The sequence spans 138 residues: Large ribosomal subunit protein uL16 (138 aa).

A compositionally biased stretch (basic residues) spans M1–Q13. The interval M1–T22 is disordered.

It belongs to the universal ribosomal protein uL16 family. In terms of assembly, part of the 50S ribosomal subunit.

Its function is as follows. Binds 23S rRNA and is also seen to make contacts with the A and possibly P site tRNAs. The sequence is that of Large ribosomal subunit protein uL16 from Polaromonas naphthalenivorans (strain CJ2).